The chain runs to 60 residues: Defensin-like protein 4 (60 aa).

Disulfide bonds link cysteine 4–cysteine 56, cysteine 17–cysteine 41, cysteine 26–cysteine 51, and cysteine 30–cysteine 53.

This sequence belongs to the DEFL family. Protease inhibitor I18 (RTI/MTI-2) subfamily.

It localises to the secreted. Its function is as follows. Inhibits trypsin and chymotrypsin. The sequence is that of Defensin-like protein 4 from Brassica napus (Rape).